The chain runs to 453 residues: Glutamyl-tRNA reductase (453 aa).

Substrate contacts are provided by residues 49–52 (TCNR), S109, 114–116 (EQQ), and Q120. Residue C50 is the Nucleophile of the active site. Residue 191–196 (GAGSMG) coordinates NADP(+). Residues 432–453 (PAAVATPTDLVDGDRTGRDLQA) form a disordered region. Over residues 443-453 (DGDRTGRDLQA) the composition is skewed to basic and acidic residues.

This sequence belongs to the glutamyl-tRNA reductase family. In terms of assembly, homodimer.

The enzyme catalyses (S)-4-amino-5-oxopentanoate + tRNA(Glu) + NADP(+) = L-glutamyl-tRNA(Glu) + NADPH + H(+). It participates in porphyrin-containing compound metabolism; protoporphyrin-IX biosynthesis; 5-aminolevulinate from L-glutamyl-tRNA(Glu): step 1/2. Its function is as follows. Catalyzes the NADPH-dependent reduction of glutamyl-tRNA(Glu) to glutamate 1-semialdehyde (GSA). In Rhodococcus erythropolis (strain PR4 / NBRC 100887), this protein is Glutamyl-tRNA reductase.